Consider the following 79-residue polypeptide: Serine protease inhibitor Kazal-type 1 (79 aa).

Residues 1 to 18 form the signal peptide; that stretch reads MKVAIIFLLSALALLSLA. Positions 26–79 constitute a Kazal-like domain; the sequence is NGKTPNCPKQIMGCPRIYDPVCGTNGITYPSECSLCFENRKFGTSIHIQRRGTC. Intrachain disulfides connect cysteine 32/cysteine 61, cysteine 39/cysteine 58, and cysteine 47/cysteine 79.

It localises to the secreted. Its function is as follows. Serine protease inhibitor which exhibits anti-trypsin activity. In the pancreas, protects against trypsin-catalyzed premature activation of zymogens. In terms of biological role, in the male reproductive tract, binds to sperm heads where it modulates sperm capacitance by inhibiting calcium uptake and nitrogen oxide (NO) production. The protein is Serine protease inhibitor Kazal-type 1 of Rattus norvegicus (Rat).